We begin with the raw amino-acid sequence, 548 residues long: 5-epi-aristolochene synthase 2 (548 aa).

Mg(2+)-binding residues include aspartate 301, aspartate 305, aspartate 444, threonine 448, and glutamate 452. A DDXXD motif motif is present at residues 301–305; it reads DDTFD.

It belongs to the terpene synthase family. As to quaternary structure, monomer. The cofactor is Mg(2+). In terms of tissue distribution, expressed in roots, but not in shoots.

It localises to the cytoplasm. The catalysed reaction is (2E,6E)-farnesyl diphosphate = (+)-5-epi-aristolochene + diphosphate. It participates in secondary metabolite biosynthesis; terpenoid biosynthesis. In terms of biological role, catalyzes the cyclization of trans,trans-farnesyl diphosphate (FPP) to the bicyclic intermediate 5-epi-aristolochene, initial step in the conversion of FPP to the sesquiterpenoid antifungal phytoalexin capsidiol. Produces germacrene A as an enzyme-bound intermediate that is not released by the enzyme, but is further cyclized to produce the bicyclic 5-epi-aristolochene. This is 5-epi-aristolochene synthase 2 from Nicotiana attenuata (Coyote tobacco).